Reading from the N-terminus, the 637-residue chain is Biosynthetic arginine decarboxylase (637 aa).

An N6-(pyridoxal phosphate)lysine modification is found at lysine 101. 286 to 296 (FDVGGGLAVDY) contacts substrate.

Belongs to the Orn/Lys/Arg decarboxylase class-II family. SpeA subfamily. Mg(2+) serves as cofactor. Pyridoxal 5'-phosphate is required as a cofactor.

It catalyses the reaction L-arginine + H(+) = agmatine + CO2. It participates in amine and polyamine biosynthesis; agmatine biosynthesis; agmatine from L-arginine: step 1/1. Its function is as follows. Catalyzes the biosynthesis of agmatine from arginine. This Shewanella baltica (strain OS223) protein is Biosynthetic arginine decarboxylase.